Here is a 310-residue protein sequence, read N- to C-terminus: Serine/threonine-protein phosphatase 4 catalytic subunit (310 aa).

Positions 53, 55, 81, and 113 each coordinate Mn(2+). The active-site Proton donor is His-114. His-163 and His-237 together coordinate Mn(2+). Position 310 is a leucine methyl ester (Leu-310).

The protein belongs to the PPP phosphatase family. PP-4 (PP-X) subfamily. Catalytic subunit of the histone H2A phosphatase complex (HTP-C) containing PPH3, PSY2 and PSY4. Mn(2+) serves as cofactor.

Its subcellular location is the cytoplasm. It is found in the nucleus. The catalysed reaction is O-phospho-L-seryl-[protein] + H2O = L-seryl-[protein] + phosphate. It catalyses the reaction O-phospho-L-threonyl-[protein] + H2O = L-threonyl-[protein] + phosphate. Functionally, involved in the dephosphorylation and activation of the transcription factor GLN3 in response to nutrient availability. Forms the histone H2A phosphatase complex in association with the regulatory subunits PSY2 and PSY4, which dephosphorylates H2AS128ph (gamma-H2A) that has been displaced from sites of DNA lesions in the double-stranded DNA break repair process. Dephosphorylation is necessary for efficient recovery from the DNA damage checkpoint. This chain is Serine/threonine-protein phosphatase 4 catalytic subunit (PPH3), found in Eremothecium gossypii (strain ATCC 10895 / CBS 109.51 / FGSC 9923 / NRRL Y-1056) (Yeast).